A 195-amino-acid chain; its full sequence is Neurensin-1 (195 aa).

Helical transmembrane passes span 66 to 86 (LISG…GFLV) and 120 to 140 (AVLF…SVFV).

This sequence belongs to the VMP family. As to expression, expressed in brain. Not detectable in other tissues tested.

It localises to the membrane. It is found in the cell projection. The protein resides in the neuron projection. Functionally, may play an important role in neural organelle transport, and in transduction of nerve signals or in nerve growth. May play a role in neurite extension. May play a role in memory consolidation. The sequence is that of Neurensin-1 from Homo sapiens (Human).